Consider the following 369-residue polypeptide: Phosphoribosyl pyrophosphate synthase-associated protein 2 (369 aa).

Position 1 is an N-acetylmethionine (Met-1). Thr-5 carries the post-translational modification Phosphothreonine. A phosphoserine mark is found at Ser-219, Ser-227, and Ser-233.

It belongs to the ribose-phosphate pyrophosphokinase family. Binds to PRPS1 and PRPS2. Ubiquitous.

Its function is as follows. Seems to play a negative regulatory role in 5-phosphoribose 1-diphosphate synthesis. The chain is Phosphoribosyl pyrophosphate synthase-associated protein 2 (PRPSAP2) from Homo sapiens (Human).